Reading from the N-terminus, the 351-residue chain is S-adenosylmethionine:tRNA ribosyltransferase-isomerase (351 aa).

The protein belongs to the QueA family. Monomer.

The protein resides in the cytoplasm. It carries out the reaction 7-aminomethyl-7-carbaguanosine(34) in tRNA + S-adenosyl-L-methionine = epoxyqueuosine(34) in tRNA + adenine + L-methionine + 2 H(+). It functions in the pathway tRNA modification; tRNA-queuosine biosynthesis. Its function is as follows. Transfers and isomerizes the ribose moiety from AdoMet to the 7-aminomethyl group of 7-deazaguanine (preQ1-tRNA) to give epoxyqueuosine (oQ-tRNA). This chain is S-adenosylmethionine:tRNA ribosyltransferase-isomerase, found in Idiomarina loihiensis (strain ATCC BAA-735 / DSM 15497 / L2-TR).